A 160-amino-acid polypeptide reads, in one-letter code: MMKKNRWFWLVAIIGLGLDQLTKYITVQSFETIGDTFGLWPGVFHLTYVINTGAAFSFFKGGAVWLRWLSLAVSLGLIFLGWYAPRMRIVEQLGYGFILAGALGNGIDRFLFGYVVDFLDFRLINFPVFNLADTFINIGIFFLLLASFPPKSSSQKNTSQ.

Transmembrane regions (helical) follow at residues 7 to 27 (WFWL…YITV), 39 to 59 (LWPG…FSFF), 62 to 82 (GAVW…FLGW), and 96 to 116 (GFIL…GYVV). Active-site residues include Asp-117 and Asp-133. A helical transmembrane segment spans residues 126-146 (FPVFNLADTFINIGIFFLLLA).

Belongs to the peptidase A8 family.

The protein resides in the cell inner membrane. It catalyses the reaction Release of signal peptides from bacterial membrane prolipoproteins. Hydrolyzes -Xaa-Yaa-Zaa-|-(S,diacylglyceryl)Cys-, in which Xaa is hydrophobic (preferably Leu), and Yaa (Ala or Ser) and Zaa (Gly or Ala) have small, neutral side chains.. The protein operates within protein modification; lipoprotein biosynthesis (signal peptide cleavage). Functionally, this protein specifically catalyzes the removal of signal peptides from prolipoproteins. In Gloeothece citriformis (strain PCC 7424) (Cyanothece sp. (strain PCC 7424)), this protein is Lipoprotein signal peptidase.